A 272-amino-acid polypeptide reads, in one-letter code: Undecaprenyl-diphosphatase (272 aa).

8 helical membrane-spanning segments follow: residues 1–21 (MSYL…FLPI), 38–58 (PGAT…VVFF), 84–104 (VRMG…GYLF), 112–132 (FRSL…LGLA), 145–165 (MTYG…VPGV), 183–203 (PVAA…SGLY), 219–239 (QTAV…AGLM), and 250–270 (FVVY…TGAI).

The protein belongs to the UppP family.

Its subcellular location is the cell membrane. It catalyses the reaction di-trans,octa-cis-undecaprenyl diphosphate + H2O = di-trans,octa-cis-undecaprenyl phosphate + phosphate + H(+). In terms of biological role, catalyzes the dephosphorylation of undecaprenyl diphosphate (UPP). Confers resistance to bacitracin. The chain is Undecaprenyl-diphosphatase from Clavibacter michiganensis subsp. michiganensis (strain NCPPB 382).